Here is a 262-residue protein sequence, read N- to C-terminus: LOB domain-containing protein 18 (262 aa).

The region spanning G36 to L138 is the LOB domain. Residues V223 to R262 form a disordered region.

This sequence belongs to the LOB domain-containing protein family. Homodimer and heterodimer with LBD16. Interacts with GIP1. As to expression, expressed in roots, stems, leaves and flowers. Expressed in vascular tissues of hypocotyls, leaves, roots, developing floral organs and siliques.

Its subcellular location is the nucleus. In terms of biological role, involved in the positive regulation of tracheary element (TE) differentiation. Involved in a positive feedback loop that maintains or promotes NAC030/VND7 expression that regulates TE differentiation-related genes. Functions in the initiation and emergence of lateral roots, in conjunction with LBD16, downstream of ARF7 and ARF19. Transcriptional activator that directly regulates EXPA14, a gene encoding a cell wall-loosening factor that promotes lateral root emergence. Activates EXPA14 by directly binding to a specific region of its promoter. Transcriptional activator that directly regulates EXPA17, a gene encoding a cell wall-loosening factor that promotes lateral root emergence. Acts downstream of the auxin influx carriers AUX1 and LAX1 in the regulation of lateral root initiation and development. In Arabidopsis thaliana (Mouse-ear cress), this protein is LOB domain-containing protein 18 (LBD18).